Consider the following 358-residue polypeptide: Phospho-N-acetylmuramoyl-pentapeptide-transferase (358 aa).

Transmembrane regions (helical) follow at residues 27–47, 81–101, 106–126, 147–167, 171–191, 201–221, 228–248, 255–275, 278–298, and 336–356; these read LFNN…SLFA, MGGV…TINL, LFLL…DDYL, VISI…PLVI, SWVI…LVGI, LDGL…TEIL, LFVF…FLKY, IFMG…IALL, SVFT…SVII, and IVEN…VLKI.

Belongs to the glycosyltransferase 4 family. MraY subfamily. Mg(2+) serves as cofactor.

The protein localises to the cell inner membrane. The enzyme catalyses UDP-N-acetyl-alpha-D-muramoyl-L-alanyl-gamma-D-glutamyl-meso-2,6-diaminopimeloyl-D-alanyl-D-alanine + di-trans,octa-cis-undecaprenyl phosphate = di-trans,octa-cis-undecaprenyl diphospho-N-acetyl-alpha-D-muramoyl-L-alanyl-D-glutamyl-meso-2,6-diaminopimeloyl-D-alanyl-D-alanine + UMP. Its pathway is cell wall biogenesis; peptidoglycan biosynthesis. Its function is as follows. Catalyzes the initial step of the lipid cycle reactions in the biosynthesis of the cell wall peptidoglycan: transfers peptidoglycan precursor phospho-MurNAc-pentapeptide from UDP-MurNAc-pentapeptide onto the lipid carrier undecaprenyl phosphate, yielding undecaprenyl-pyrophosphoryl-MurNAc-pentapeptide, known as lipid I. The sequence is that of Phospho-N-acetylmuramoyl-pentapeptide-transferase from Prochlorococcus marinus (strain MIT 9215).